Reading from the N-terminus, the 39-residue chain is uncharacterized protein (39 aa).

This sequence belongs to the asfivirus C84L family.

This is an uncharacterized protein from African swine fever virus (isolate Warthog/Namibia/Wart80/1980) (ASFV).